Consider the following 114-residue polypeptide: Large ribosomal subunit protein uL22 (114 aa).

This sequence belongs to the universal ribosomal protein uL22 family. As to quaternary structure, part of the 50S ribosomal subunit.

Its function is as follows. This protein binds specifically to 23S rRNA; its binding is stimulated by other ribosomal proteins, e.g. L4, L17, and L20. It is important during the early stages of 50S assembly. It makes multiple contacts with different domains of the 23S rRNA in the assembled 50S subunit and ribosome. The globular domain of the protein is located near the polypeptide exit tunnel on the outside of the subunit, while an extended beta-hairpin is found that lines the wall of the exit tunnel in the center of the 70S ribosome. In Aeromonas hydrophila subsp. hydrophila (strain ATCC 7966 / DSM 30187 / BCRC 13018 / CCUG 14551 / JCM 1027 / KCTC 2358 / NCIMB 9240 / NCTC 8049), this protein is Large ribosomal subunit protein uL22.